Consider the following 438-residue polypeptide: Glycosyl hydrolase family 109 protein (438 aa).

Residues 1–33 (MDKTSRRDLLKLASLAGIGAGLARSQGSSKSMA) constitute a signal peptide (tat-type signal). Residues 52–53 (GR), aspartate 74, 125–128 (WVWH), 145–146 (EV), and asparagine 174 each bind NAD(+). Residues tyrosine 203, arginine 221, 233 to 236 (YPTH), and tyrosine 315 contribute to the substrate site. NAD(+) is bound at residue tyrosine 233. The tract at residues 408–438 (GPLSEASVANGSAPQKFPDFTRGKWQTRQPV) is disordered.

The protein belongs to the Gfo/Idh/MocA family. Glycosyl hydrolase 109 subfamily. NAD(+) is required as a cofactor. In terms of processing, predicted to be exported by the Tat system. The position of the signal peptide cleavage has not been experimentally proven.

Its function is as follows. Glycosidase. This chain is Glycosyl hydrolase family 109 protein, found in Solibacter usitatus (strain Ellin6076).